The following is a 228-amino-acid chain: Heptaprenylglyceryl phosphate synthase (228 aa).

Position 12 (lysine 12) interacts with sn-glycerol 1-phosphate. The Mg(2+) site is built by aspartate 14 and serine 40. Sn-glycerol 1-phosphate contacts are provided by residues 158–163 (YLEYSG), glycine 188, and 208–209 (GN).

This sequence belongs to the GGGP/HepGP synthase family. Group I subfamily. As to quaternary structure, homodimer. The cofactor is Mg(2+).

It catalyses the reaction sn-glycerol 1-phosphate + all-trans-heptaprenyl diphosphate = 3-heptaprenyl-sn-glycero-1-phosphate + diphosphate. The protein operates within membrane lipid metabolism; glycerophospholipid metabolism. In terms of biological role, prenyltransferase that catalyzes in vivo the transfer of the heptaprenyl moiety of heptaprenyl pyrophosphate (HepPP; 35 carbon atoms) to the C3 hydroxyl of sn-glycerol-1-phosphate (G1P), producing heptaprenylglyceryl phosphate (HepGP). This reaction is an ether-bond-formation step in the biosynthesis of archaea-type G1P-based membrane lipids found in Bacillales. To a much lesser extent, is also able to use geranyl diphosphate (GPP; C10) and geranylgeranyl diphosphate (GGPP; C20) as the prenyl donors, but not farnesyl pyrophosphate (FPP; C15). Cannot use glycerol-3-phosphate (G3P) or 3-phosphoglycerate (3PG) as an acceptor. This Bacillus subtilis (strain 168) protein is Heptaprenylglyceryl phosphate synthase.